A 198-amino-acid chain; its full sequence is Charged multivesicular body protein 1a (198 aa).

Coiled coils occupy residues 7 to 41 and 176 to 198; these read QLKF…QQKN and GETS…ALRN. Residues 171–198 are disordered; that stretch reads GASALGETSARAQEKEDQLSRRLAALRN. Residues 187-197 carry the MIT-interacting motif motif; it reads DQLSRRLAALR.

The protein belongs to the SNF7 family. In terms of assembly, probable peripherally associated component of the endosomal sorting required for transport complex III (ESCRT-III).

Its subcellular location is the cytoplasm. It localises to the endosome membrane. In terms of biological role, probable peripherally associated component of the endosomal sorting required for transport complex III (ESCRT-III) which is involved in multivesicular bodies (MVBs) formation and sorting of endosomal cargo proteins into MVBs. MVBs contain intraluminal vesicles (ILVs) that are generated by invagination and scission from the limiting membrane of the endosome and mostly are delivered to lysosomes enabling degradation of membrane proteins, such as stimulated growth factor receptors, lysosomal enzymes and lipids. This Danio rerio (Zebrafish) protein is Charged multivesicular body protein 1a (chmp1a).